The sequence spans 118 residues: Large ribosomal subunit protein bL20 (118 aa).

This sequence belongs to the bacterial ribosomal protein bL20 family.

In terms of biological role, binds directly to 23S ribosomal RNA and is necessary for the in vitro assembly process of the 50S ribosomal subunit. It is not involved in the protein synthesizing functions of that subunit. In Shewanella baltica (strain OS223), this protein is Large ribosomal subunit protein bL20.